A 498-amino-acid chain; its full sequence is Calcium-dependent protein kinase 22 (498 aa).

Gly-2 carries N-myristoyl glycine lipidation. Positions 36 to 305 constitute a Protein kinase domain; that stretch reads YSFGDELGKG…AADVLEHPWM (270 aa). ATP contacts are provided by residues 42–50 and Lys-65; that span reads LGKGNFGTT. The active-site Proton acceptor is the Asp-164. Ser-204 is modified (phosphoserine). The interval 309 to 339 is autoinhibitory domain; that stretch reads APDKPIDNVVLSRMKQFRAMNKLKKLALKVI. EF-hand domains are found at residues 346 to 381, 382 to 417, 418 to 453, and 454 to 488; these read EEIK…HGSK, LSET…RHRL, ERDE…HGMG, and DEAN…GILQ. Residues Asp-359, Asp-361, Ser-363, Ser-365, Glu-370, Asp-395, Asp-397, Asn-399, Thr-401, Glu-406, Asp-431, Asp-433, Ser-435, His-437, Glu-442, Asp-466, Asn-468, Asp-470, Lys-472, and Glu-477 each contribute to the Ca(2+) site.

The protein belongs to the protein kinase superfamily. Ser/Thr protein kinase family. CDPK subfamily.

Its subcellular location is the membrane. It carries out the reaction L-seryl-[protein] + ATP = O-phospho-L-seryl-[protein] + ADP + H(+). The catalysed reaction is L-threonyl-[protein] + ATP = O-phospho-L-threonyl-[protein] + ADP + H(+). Its activity is regulated as follows. Activated by calcium. Autophosphorylation may play an important role in the regulation of the kinase activity. Functionally, may play a role in signal transduction pathways that involve calcium as a second messenger. This Arabidopsis thaliana (Mouse-ear cress) protein is Calcium-dependent protein kinase 22 (CPK22).